We begin with the raw amino-acid sequence, 610 residues long: DNA replication regulator sld2 (610 aa).

Basic and acidic residues predominate over residues 28-42; it reads WAQKNDGKKPSREAI. Disordered stretches follow at residues 28–115, 127–261, and 338–610; these read WAQK…AVHE, SPAV…ERSV, and EQGG…RRRR. Composition is skewed to polar residues over residues 86–110 and 232–261; these read ETSLPSASTPSKRNRSAATPKSQHY and TKTSTPLNKNTGNSPSKNNLTKTPSGERSV. Composition is skewed to acidic residues over residues 373-386 and 414-428; these read VPEEENSFEEDEAA and FDDENFYDSQDEEDL. A compositionally biased stretch (basic residues) spans 442 to 464; that stretch reads VFKKKGQKRTTRKVNMRPTRTKR. Over residues 470-480 the composition is skewed to acidic residues; it reads AEEEDDGEEEH. Basic and acidic residues predominate over residues 493-503; the sequence is KNLDGDDHHTL. A compositionally biased stretch (acidic residues) spans 514–527; the sequence is EFDDGSEGEDEEAE. The segment covering 544 to 573 has biased composition (basic and acidic residues); it reads SAKEKTKKDATTETKKKKGTKEGGDEEPAK.

This sequence belongs to the SLD2 family.

It localises to the cytoplasm. The protein localises to the nucleus. Functionally, has a role in the initiation of DNA replication. Required at S-phase checkpoint. In Neurospora crassa (strain ATCC 24698 / 74-OR23-1A / CBS 708.71 / DSM 1257 / FGSC 987), this protein is DNA replication regulator sld2 (drc-4).